We begin with the raw amino-acid sequence, 1444 residues long: Rho GTPase-activating protein 31 (1444 aa).

The region spanning 21–216 (CDLTEYLESS…FILNHVDQIF (196 aa)) is the Rho-GAP domain. Residue serine 272 is modified to Phosphoserine. Threonine 286 carries the phosphothreonine modification. 3 positions are modified to phosphoserine: serine 346, serine 349, and serine 387. Residues 398-427 (WGQEGMPPGAEGGFDVSSDRSHLQGAQARP) form a disordered region. Phosphoserine is present on serine 476. A disordered region spans residues 504 to 631 (TNSTPCRTPP…ESSTLQESPR (128 aa)). The segment covering 515–534 (ELQSLSSLEEFSFHGSESGG) has biased composition (low complexity). The span at 600–619 (NELEKRPNPEKVVEEGREAG) shows a compositional bias: basic and acidic residues. Residue threonine 679 is modified to Phosphothreonine. Disordered stretches follow at residues 688–893 (SSLG…EDDT) and 906–1108 (EPWE…SSLN). A phosphoserine mark is found at serine 701 and serine 712. The span at 722 to 734 (PANQSTQGASTAA) shows a compositional bias: polar residues. A compositionally biased stretch (basic and acidic residues) spans 735 to 745 (SREKPEPEQGL). The span at 777–790 (LSPPLPPAPPPPTP) shows a compositional bias: pro residues. Serine 778 is subject to Phosphoserine. At threonine 789 the chain carries Phosphothreonine. Residues 803–817 (GPEREDSSRKLRTDL) are compositionally biased toward basic and acidic residues. The segment covering 822-834 (LKSQDSPEISSLC) has biased composition (polar residues). Residues 839 to 848 (ATPRHSDKQN) show a composition bias toward basic and acidic residues. The segment covering 960-977 (TVKSQWTLEVPSSSSCAN) has biased composition (polar residues). Serine 974 is subject to Phosphoserine. The span at 992 to 1008 (PRREITGWDEKALRSFR) shows a compositional bias: basic and acidic residues. Over residues 1028 to 1038 (VQPNPAETSPI) the composition is skewed to polar residues. The segment covering 1064–1075 (GPESSKESSPSV) has biased composition (low complexity). Serine 1105, serine 1106, and serine 1178 each carry phosphoserine. Composition is skewed to polar residues over residues 1211–1224 (QIPQ…SGEN) and 1234–1245 (EGPSSTSGTTQK). A disordered region spans residues 1211–1346 (QIPQPLPSQS…HRSRPGRPQS (136 aa)). The segment covering 1246-1265 (PAKDDSPSSLESSKEEKPKQ) has biased composition (basic and acidic residues). 2 stretches are compositionally biased toward polar residues: residues 1292–1303 (PGSSNLLSTQDA) and 1314–1323 (TEPSGDNLLS).

Interacts with ITSN1, which inhibits GAP activity. Interacts with PARVA. Interacts with GTP-loaded RHOU. Phosphorylation on Thr-789 reduces GAP activity.

The protein resides in the cell projection. It is found in the lamellipodium. Its subcellular location is the cell junction. The protein localises to the focal adhesion. In terms of biological role, functions as a GTPase-activating protein (GAP) for RAC1 and CDC42. Required for cell spreading, polarized lamellipodia formation and cell migration. The protein is Rho GTPase-activating protein 31 (ARHGAP31) of Homo sapiens (Human).